A 90-amino-acid polypeptide reads, in one-letter code: Probable Fe(2+)-trafficking protein (90 aa).

The protein belongs to the Fe(2+)-trafficking protein family.

Its function is as follows. Could be a mediator in iron transactions between iron acquisition and iron-requiring processes, such as synthesis and/or repair of Fe-S clusters in biosynthetic enzymes. This is Probable Fe(2+)-trafficking protein from Chromohalobacter salexigens (strain ATCC BAA-138 / DSM 3043 / CIP 106854 / NCIMB 13768 / 1H11).